The primary structure comprises 427 residues: Enolase (427 aa).

(2R)-2-phosphoglycerate is bound at residue glutamine 163. Glutamate 205 serves as the catalytic Proton donor. Positions 242, 285, and 312 each coordinate Mg(2+). The (2R)-2-phosphoglycerate site is built by lysine 337, arginine 366, serine 367, and lysine 388. Lysine 337 serves as the catalytic Proton acceptor.

Belongs to the enolase family. Requires Mg(2+) as cofactor.

The protein localises to the cytoplasm. It localises to the secreted. It is found in the cell surface. The enzyme catalyses (2R)-2-phosphoglycerate = phosphoenolpyruvate + H2O. The protein operates within carbohydrate degradation; glycolysis; pyruvate from D-glyceraldehyde 3-phosphate: step 4/5. Its function is as follows. Catalyzes the reversible conversion of 2-phosphoglycerate (2-PG) into phosphoenolpyruvate (PEP). It is essential for the degradation of carbohydrates via glycolysis. The sequence is that of Enolase from Paraburkholderia phytofirmans (strain DSM 17436 / LMG 22146 / PsJN) (Burkholderia phytofirmans).